The following is a 503-amino-acid chain: MRYDVVIAGAGPTGLMLACELRLAGARTLVLERLAEPVDFSKALGVHARTVELLDMRGLGEGFQAEAPKLRGGNFASLGVPLDFSSFDTRHPYALFVPQVRTEELLTGRALELGAELRRGHAVTALEQDADGVTVSVTGPEGPYEVECAYLVGCDGGGSTVRKLLGIDFPGQDPHMFAVIADARFREELPHGEGMGPMRPYGVMRHDLRAWFAAFPLEPDVYRATVAFFDRPYADRRAPVTEEDVRAALTEVAGSDFGMHDVRWLSRLTDTSRQAERYRDGRVLLAGDACHIHLPAGGQGLNLGFQDAVNLGWKLGATIAGTAPPELLDTYEAERRPIAAGVLRNTRAQAVLIDPDPRYEGLRELMIELLHVPETNRYLAGLISALDVRYPMAGEHPLLGRRVPDLPLVTEDGTRQLSTYFHAARGVLLTLGCDQPLADEAAAWKDRVDLVAAEGVADPGSAVDGLTALLVRPDGYICWTAAPETGTDGLTDALRTWFGPPAM.

FAD contacts are provided by residues threonine 13, 32–33 (ER), leucine 44, glutamine 99, valine 123, threonine 160, aspartate 288, and 301–302 (LN).

This sequence belongs to the PheA/TfdB FAD monooxygenase family. Monomer. The cofactor is FAD.

It carries out the reaction 5a,11a-dehydrotetracycline + NADPH + O2 + H(+) = 5a,11a-dehydrooxytetracycline + NADP(+) + H2O. The enzyme catalyses anhydrotetracycline + NADPH + O2 + H(+) = 5a,11a-dehydrotetracycline + NADP(+) + H2O. Its pathway is antibiotic biosynthesis; oxytetracycline biosynthesis. In terms of biological role, involved in the biosynthesis of the antibiotics oxytetracycline and tetracycline. OxyS starts by catalyzing the stereospecific hydroxylation of anhydrotetracycline at C(6) position to yield 5a,11a-dehydrotetracycline (12-dehydrotetracycline). If the released product is captured by OxyR, it is reduced to tetracycline. However, if the released product is recaptured by OxyS, it performs an additional hydroxylation at C(5), producing 5a,11a-dehydrooxytetracycline, which, following the action of OxyR becomes oxytetracycline. The chain is 12-dehydrotetracycline 5-monooxygenase/anhydrotetracycline 6-monooxygenase from Streptomyces rimosus subsp. rimosus (strain ATCC 10970 / DSM 40260 / JCM 4667 / NRRL 2234).